The following is a 245-amino-acid chain: Polyhedrin (245 aa).

Belongs to the polyhedrin family.

Major component of the virus occlusion bodies, which are large proteinaceous structures (polyhedra), that protect the virus from the outside environment for extended periods until they are ingested by insect larvae. This is Polyhedrin (PH) from Bombyx mori nuclear polyhedrosis virus (BmNPV).